The sequence spans 406 residues: CRISP/Allergen/PR-1 (406 aa).

An N-terminal signal peptide occupies residues 1-18 (MHFQVILMMMWLWLEAEG). Residue Asn-39 is glycosylated (N-linked (GlcNAc...) asparagine). The 148-residue stretch at 58-205 (LREHNKLRSR…TFKDLYTCNY (148 aa)) folds into the SCP domain.

This sequence belongs to the CRISP family. In terms of processing, contains 9 disulfide bonds. Expressed by the venom gland.

Its subcellular location is the secreted. The chain is CRISP/Allergen/PR-1 from Trittame loki (Brush-footed trapdoor spider).